Reading from the N-terminus, the 158-residue chain is Transcription elongation factor GreA (158 aa).

This sequence belongs to the GreA/GreB family.

Necessary for efficient RNA polymerase transcription elongation past template-encoded arresting sites. The arresting sites in DNA have the property of trapping a certain fraction of elongating RNA polymerases that pass through, resulting in locked ternary complexes. Cleavage of the nascent transcript by cleavage factors such as GreA or GreB allows the resumption of elongation from the new 3'terminus. GreA releases sequences of 2 to 3 nucleotides. In Rhizobium etli (strain ATCC 51251 / DSM 11541 / JCM 21823 / NBRC 15573 / CFN 42), this protein is Transcription elongation factor GreA.